We begin with the raw amino-acid sequence, 200 residues long: MCRTLAAFPTTCLERAKEFKTRLGIFLHKSELGSDPASVGKFEWGSKHSKDGRNFSEDVLGWRESFDLLLSSKNGVAAFHTFLKTEFSEENLEFWLACEEFKKLRSATKLASRAHRIFEEFIRSEAPKEVNLDHETRELTRTNLQAATATCFDVAQGKTRTLMEKDSYPRFLKSPAYRDLAAQAASASPSSGSPAEPSHT.

S-palmitoyl cysteine attachment occurs at residues C2 and C12. The RGS domain occupies 65–181; sequence SFDLLLSSKN…LKSPAYRDLA (117 aa). A phosphotyrosine mark is found at Y168 and Y177.

Interacts with GNAI1 and GNAQ. Interacts with GNAI3, GNAI3 and GNAO1. As to quaternary structure, (Microbial infection) Interacts with porcine circovirus 2 ORF3 protein. In terms of processing, palmitoylated on Cys-2 and/or Cys-12. Phosphorylated. Phosphorylation at Tyr-168 by EGFR enhances GTPase accelerating (GAP) activity toward GNAI1.

Its subcellular location is the membrane. Functionally, regulates G protein-coupled receptor signaling cascades. Inhibits signal transduction by increasing the GTPase activity of G protein alpha subunits, thereby driving them into their inactive GDP-bound form. Plays an important role in the phototransduction cascade by regulating the lifetime and effective concentration of activated transducin alpha. May regulate extra and intracellular mitogenic signals. (Microbial infection) Gets inactivated and/or degraded by porcine circovirus 2 ORF3 protein, leading to enhanced expression of IL-6 and IL-8 in infected lymphocytes. This would explain chronic inflammatory response of PCV2 infected pigs. The sequence is that of Regulator of G-protein signaling 16 (RGS16) from Sus scrofa (Pig).